A 620-amino-acid polypeptide reads, in one-letter code: Translation initiation factor IF-2 (620 aa).

The tr-type G domain maps to 119-288 (ERPPIVTIMG…IILISELENL (170 aa)). The interval 128–135 (GHVDHGKT) is G1. Position 128-135 (128-135 (GHVDHGKT)) interacts with GTP. Residues 153 to 157 (GITQA) form a G2 region. The G3 stretch occupies residues 175–178 (DTPG). Residues 175-179 (DTPGH) and 229-232 (NKID) each bind GTP. A G4 region spans residues 229–232 (NKID). The G5 stretch occupies residues 265-267 (SAI).

It belongs to the TRAFAC class translation factor GTPase superfamily. Classic translation factor GTPase family. IF-2 subfamily.

It localises to the cytoplasm. Its function is as follows. One of the essential components for the initiation of protein synthesis. Protects formylmethionyl-tRNA from spontaneous hydrolysis and promotes its binding to the 30S ribosomal subunits. Also involved in the hydrolysis of GTP during the formation of the 70S ribosomal complex. The protein is Translation initiation factor IF-2 of Mycoplasma mycoides subsp. mycoides SC (strain CCUG 32753 / NCTC 10114 / PG1).